We begin with the raw amino-acid sequence, 497 residues long: FAD-linked oxidoreductase fogF (497 aa).

An N-terminal signal peptide occupies residues M1–A18. The region spanning N59–L229 is the FAD-binding PCMH-type domain.

This sequence belongs to the oxygen-dependent FAD-linked oxidoreductase family. FAD serves as cofactor.

Its pathway is secondary metabolite biosynthesis. Functionally, FAD-linked oxidoreductase; part of the gene cluster that mediates the biosynthesis of flavoglaucin and congeners (including aspergin, dihydroauroglaucin and auroglaucin), prenylated salicylaldehyde derivatives carrying a saturated or an unsaturated C-7 side chain. The PKS fogA releases the carboxylic acid (8E,10E,12E)-3,5,7-trihydroxytetradeca-8,10,12-trienoic acid as its product, as well as derivatives with one and two double bonds. FogA is indeed able to reduce the initial triketide, thus being at least partially responsible for the differently saturated heptyl side chains of flavoglaucin congeners. The oxidoreductases fogB, fogC and fogD modify the nascent polyketide in fogA-bound form and, together, fogA, fogB, fogC and fogD are necessary for the formation of the aromatic core and the cyclized PKS products are released as salicyl alcohols. In particular, fogB is responsible for oxidation of a hydroxyl group or reduction of remaining double bond(s) at the C-7 residue whereas fogD is probably involved in the reductive release of the modified PKS products. The cytochrome P450 monooxygenase fogE is then responsible for the hydroxylation at C-3 of the benzene ring. The fogE products are substrates of the prenyltransferase fogH and the prenylated benzyl alcohols are subsequently oxidized by the fogF to produce the final aryl aldehydes flavoglaucin and congeners. The short-chain dehydrogenase fogG does not seem to be involved in the biosynthesis of the prenylated salicylaldehyde derivatives. The sequence is that of FAD-linked oxidoreductase fogF from Aspergillus ruber (strain CBS 135680).